Here is a 327-residue protein sequence, read N- to C-terminus: L-lactate dehydrogenase (327 aa).

Residues Val-18, Asp-39, Lys-44, Tyr-69, and 83-84 contribute to the NAD(+) site; that span reads GA. Substrate-binding positions include Gln-86, Arg-92, and 124–127; that span reads NPVD. NAD(+) contacts are provided by residues 122-124 and Ser-147; that span reads AAN. Substrate is bound at residue 152-155; the sequence is DSAR. Beta-D-fructose 1,6-bisphosphate contacts are provided by Arg-157 and His-172. His-179 functions as the Proton acceptor in the catalytic mechanism. Phosphotyrosine is present on Tyr-224. Thr-233 serves as a coordination point for substrate.

The protein belongs to the LDH/MDH superfamily. LDH family. In terms of assembly, homotetramer.

The protein resides in the cytoplasm. It catalyses the reaction (S)-lactate + NAD(+) = pyruvate + NADH + H(+). The protein operates within fermentation; pyruvate fermentation to lactate; (S)-lactate from pyruvate: step 1/1. Its activity is regulated as follows. Allosterically activated by fructose 1,6-bisphosphate (FBP). In terms of biological role, catalyzes the conversion of lactate to pyruvate. The protein is L-lactate dehydrogenase of Streptococcus equi subsp. equi (strain 4047).